The following is a 181-amino-acid chain: Acireductone dioxygenase (181 aa).

Positions 98, 100, 104, and 142 each coordinate Fe(2+). Residues His-98, His-100, Glu-104, and His-142 each coordinate Ni(2+).

It belongs to the acireductone dioxygenase (ARD) family. As to quaternary structure, monomer. Fe(2+) is required as a cofactor. Ni(2+) serves as cofactor.

The catalysed reaction is 1,2-dihydroxy-5-(methylsulfanyl)pent-1-en-3-one + O2 = 3-(methylsulfanyl)propanoate + CO + formate + 2 H(+). The enzyme catalyses 1,2-dihydroxy-5-(methylsulfanyl)pent-1-en-3-one + O2 = 4-methylsulfanyl-2-oxobutanoate + formate + 2 H(+). It participates in amino-acid biosynthesis; L-methionine biosynthesis via salvage pathway; L-methionine from S-methyl-5-thio-alpha-D-ribose 1-phosphate: step 5/6. Catalyzes 2 different reactions between oxygen and the acireductone 1,2-dihydroxy-3-keto-5-methylthiopentene (DHK-MTPene) depending upon the metal bound in the active site. Fe-containing acireductone dioxygenase (Fe-ARD) produces formate and 2-keto-4-methylthiobutyrate (KMTB), the alpha-ketoacid precursor of methionine in the methionine recycle pathway. Ni-containing acireductone dioxygenase (Ni-ARD) produces methylthiopropionate, carbon monoxide and formate, and does not lie on the methionine recycle pathway. This is Acireductone dioxygenase from Alcanivorax borkumensis (strain ATCC 700651 / DSM 11573 / NCIMB 13689 / SK2).